Consider the following 336-residue polypeptide: Phospho-N-acetylmuramoyl-pentapeptide-transferase (336 aa).

10 helical membrane passes run 3–23 (LSIMAGVIAFVLTVIAIPRFI), 52–72 (MGGTVFLIVALLVSLIFSIIL), 79–99 (NLGATFGILSVVLIYGIIGFL), 123–143 (LIAGLIFYFVHVLPSGTSAIN), 144–164 (IFGFYLEVGYLYAFFVLFWVV), 175–195 (GIDGLASISVVISLITYGIIA), 201–221 (FDILLIIVIMIGALLGFFVFN), 227–247 (VFMGDVGSLALGAMLAAISIA), 255–275 (LFIGFVYVFETSSVMLQVAYF), and 315–335 (VDAFLWAIGIFMSAITLAILY).

It belongs to the glycosyltransferase 4 family. MraY subfamily. Mg(2+) is required as a cofactor.

It localises to the cell membrane. The catalysed reaction is UDP-N-acetyl-alpha-D-muramoyl-L-alanyl-gamma-D-glutamyl-L-lysyl-D-alanyl-D-alanine + di-trans,octa-cis-undecaprenyl phosphate = Mur2Ac(oyl-L-Ala-gamma-D-Glu-L-Lys-D-Ala-D-Ala)-di-trans,octa-cis-undecaprenyl diphosphate + UMP. Its pathway is cell wall biogenesis; peptidoglycan biosynthesis. Catalyzes the initial step of the lipid cycle reactions in the biosynthesis of the cell wall peptidoglycan: transfers peptidoglycan precursor phospho-MurNAc-pentapeptide from UDP-MurNAc-pentapeptide onto the lipid carrier undecaprenyl phosphate, yielding undecaprenyl-pyrophosphoryl-MurNAc-pentapeptide, known as lipid I. In Streptococcus agalactiae serotype Ia (strain ATCC 27591 / A909 / CDC SS700), this protein is Phospho-N-acetylmuramoyl-pentapeptide-transferase.